Reading from the N-terminus, the 212-residue chain is Protein HP-25 homolog 1 (212 aa).

The first 34 residues, 1–34 (MPGGRRRVGSMNIAGFWILAQFVLLLVANVKSSA), serve as a signal peptide directing secretion. Positions 36–66 (SELCGPRGARGPPGLSGLPGPPGYTGPIGMP) are disordered. Over residues 40 to 53 (GPRGARGPPGLSGL) the composition is skewed to low complexity. The Collagen-like domain maps to 40 to 76 (GPRGARGPPGLSGLPGPPGYTGPIGMPGLTGRPGLPG). The 131-residue stretch at 82-212 (PPLPQSAFSV…VFYGFLLNGN (131 aa)) folds into the C1q domain. Asn125 is a glycosylation site (N-linked (GlcNAc...) asparagine).

The protein localises to the secreted. This Bos taurus (Bovine) protein is Protein HP-25 homolog 1.